A 512-amino-acid polypeptide reads, in one-letter code: Glutathione-binding protein GsiB (512 aa).

Positions 1 to 26 are cleaved as a signal peptide; that stretch reads MARAVHRSGLVALGIATALMASCAFA.

It belongs to the bacterial solute-binding protein 5 family. As to quaternary structure, the complex is composed of two ATP-binding proteins (GsiA), two transmembrane proteins (GsiC and GsiD) and a solute-binding protein (GsiB).

The protein resides in the periplasm. In terms of biological role, part of the ABC transporter complex GsiABCD involved in glutathione import. Binds glutathione. This is Glutathione-binding protein GsiB from Shigella boydii serotype 4 (strain Sb227).